A 302-amino-acid chain; its full sequence is Methionyl-tRNA formyltransferase (302 aa).

108–111 serves as a coordination point for (6S)-5,6,7,8-tetrahydrofolate; it reads SLLP.

This sequence belongs to the Fmt family.

It catalyses the reaction L-methionyl-tRNA(fMet) + (6R)-10-formyltetrahydrofolate = N-formyl-L-methionyl-tRNA(fMet) + (6S)-5,6,7,8-tetrahydrofolate + H(+). Attaches a formyl group to the free amino group of methionyl-tRNA(fMet). The formyl group appears to play a dual role in the initiator identity of N-formylmethionyl-tRNA by promoting its recognition by IF2 and preventing the misappropriation of this tRNA by the elongation apparatus. The sequence is that of Methionyl-tRNA formyltransferase from Nitratiruptor sp. (strain SB155-2).